We begin with the raw amino-acid sequence, 360 residues long: Peptide chain release factor 1 (360 aa).

Position 235 is an N5-methylglutamine (glutamine 235). A disordered region spans residues 284–313 (AKRQQAEASTRRNLLGSGDRSDRNRTYNFP).

This sequence belongs to the prokaryotic/mitochondrial release factor family. In terms of processing, methylated by PrmC. Methylation increases the termination efficiency of RF1.

The protein resides in the cytoplasm. Peptide chain release factor 1 directs the termination of translation in response to the peptide chain termination codons UAG and UAA. This Salmonella schwarzengrund (strain CVM19633) protein is Peptide chain release factor 1.